The primary structure comprises 179 residues: Large ribosomal subunit protein uL5 (179 aa).

This sequence belongs to the universal ribosomal protein uL5 family. In terms of assembly, part of the 50S ribosomal subunit; part of the 5S rRNA/L5/L18/L25 subcomplex. Contacts the 5S rRNA and the P site tRNA. Forms a bridge to the 30S subunit in the 70S ribosome.

This is one of the proteins that bind and probably mediate the attachment of the 5S RNA into the large ribosomal subunit, where it forms part of the central protuberance. In the 70S ribosome it contacts protein S13 of the 30S subunit (bridge B1b), connecting the 2 subunits; this bridge is implicated in subunit movement. Contacts the P site tRNA; the 5S rRNA and some of its associated proteins might help stabilize positioning of ribosome-bound tRNAs. This is Large ribosomal subunit protein uL5 from Dichelobacter nodosus (strain VCS1703A).